The chain runs to 79 residues: Biotin synthase auxiliary protein (79 aa).

It belongs to the BsaP family. The cofactor is iron-sulfur cluster.

In terms of biological role, required for the activity of the biotin synthase BioB. The sequence is that of Biotin synthase auxiliary protein from Mycobacterium bovis (strain ATCC BAA-935 / AF2122/97).